The primary structure comprises 257 residues: Triosephosphate isomerase (257 aa).

2 residues coordinate substrate: Asn-12 and Lys-14. Residue His-98 is the Electrophile of the active site. Glu-169 acts as the Proton acceptor in catalysis.

The protein belongs to the triosephosphate isomerase family. In terms of assembly, homodimer.

The enzyme catalyses D-glyceraldehyde 3-phosphate = dihydroxyacetone phosphate. Its pathway is carbohydrate biosynthesis; gluconeogenesis. It functions in the pathway carbohydrate degradation; glycolysis; D-glyceraldehyde 3-phosphate from glycerone phosphate: step 1/1. This Dictyostelium discoideum (Social amoeba) protein is Triosephosphate isomerase (tpiA).